A 181-amino-acid polypeptide reads, in one-letter code: Regulator of G-protein signaling 5 (181 aa).

The region spanning 64–180 (SLDKLLQSNY…VRSEFYKELI (117 aa)) is the RGS domain.

It is found in the cytoplasm. The protein localises to the membrane. Functionally, inhibits signal transduction by increasing the GTPase activity of G protein alpha subunits thereby driving them into their inactive GDP-bound form. Binds to G(i)-alpha and G(o)-alpha, but not to G(s)-alpha. The sequence is that of Regulator of G-protein signaling 5 (Rgs5) from Rattus norvegicus (Rat).